The primary structure comprises 352 residues: Putative formin-like protein 15b (352 aa).

One can recognise an FH2 domain in the interval 1–350 (MTLFNFIKLF…KDAKEAEMEK (350 aa)).

Belongs to the formin-like family. Class-II subfamily.

The sequence is that of Putative formin-like protein 15b (FH15B) from Arabidopsis thaliana (Mouse-ear cress).